Reading from the N-terminus, the 324-residue chain is Acetyl-coenzyme A carboxylase carboxyl transferase subunit beta (324 aa).

Residues L28–P297 form the CoA carboxyltransferase N-terminal domain. Zn(2+) is bound by residues C32, C35, C51, and C54. Residues C32–C54 form a C4-type zinc finger.

It belongs to the AccD/PCCB family. Acetyl-CoA carboxylase is a heterohexamer composed of biotin carboxyl carrier protein (AccB), biotin carboxylase (AccC) and two subunits each of ACCase subunit alpha (AccA) and ACCase subunit beta (AccD). Zn(2+) is required as a cofactor.

The protein resides in the cytoplasm. It carries out the reaction N(6)-carboxybiotinyl-L-lysyl-[protein] + acetyl-CoA = N(6)-biotinyl-L-lysyl-[protein] + malonyl-CoA. It participates in lipid metabolism; malonyl-CoA biosynthesis; malonyl-CoA from acetyl-CoA: step 1/1. Its function is as follows. Component of the acetyl coenzyme A carboxylase (ACC) complex. Biotin carboxylase (BC) catalyzes the carboxylation of biotin on its carrier protein (BCCP) and then the CO(2) group is transferred by the transcarboxylase to acetyl-CoA to form malonyl-CoA. This chain is Acetyl-coenzyme A carboxylase carboxyl transferase subunit beta, found in Methylococcus capsulatus (strain ATCC 33009 / NCIMB 11132 / Bath).